Consider the following 412-residue polypeptide: 1-deoxy-D-xylulose 5-phosphate reductoisomerase (412 aa).

Positions 5, 6, 7, 8, 31, 33, and 125 each coordinate NADPH. Lys126 is a binding site for 1-deoxy-D-xylulose 5-phosphate. Glu127 contacts NADPH. Residue Asp151 coordinates Mn(2+). Residues Ser152, Glu153, Ser189, and His212 each coordinate 1-deoxy-D-xylulose 5-phosphate. Glu153 contributes to the Mn(2+) binding site. NADPH is bound at residue Gly218. Residues Ser225, Asn230, Lys231, and Glu234 each contribute to the 1-deoxy-D-xylulose 5-phosphate site. Glu234 is a binding site for Mn(2+).

Belongs to the DXR family. Requires Mg(2+) as cofactor. Mn(2+) serves as cofactor.

It catalyses the reaction 2-C-methyl-D-erythritol 4-phosphate + NADP(+) = 1-deoxy-D-xylulose 5-phosphate + NADPH + H(+). Its pathway is isoprenoid biosynthesis; isopentenyl diphosphate biosynthesis via DXP pathway; isopentenyl diphosphate from 1-deoxy-D-xylulose 5-phosphate: step 1/6. Its function is as follows. Catalyzes the NADPH-dependent rearrangement and reduction of 1-deoxy-D-xylulose-5-phosphate (DXP) to 2-C-methyl-D-erythritol 4-phosphate (MEP). This is 1-deoxy-D-xylulose 5-phosphate reductoisomerase from Prochlorococcus marinus (strain MIT 9313).